We begin with the raw amino-acid sequence, 63 residues long: Small ribosomal subunit protein eS17 (63 aa).

The protein belongs to the eukaryotic ribosomal protein eS17 family.

This chain is Small ribosomal subunit protein eS17 (rps17e), found in Haloarcula marismortui (strain ATCC 43049 / DSM 3752 / JCM 8966 / VKM B-1809) (Halobacterium marismortui).